Consider the following 1224-residue polypeptide: Coatomer subunit alpha (1224 aa).

WD repeat units lie at residues 7–37, 49–79, 91–121, and 133–163; these read TKSA…QLWD, EHDG…KVWN, GHLD…RVWN, and GHNH…RVWD. S173 bears the Phosphoserine mark. Position 185 is a phosphothreonine (T185). WD repeat units follow at residues 203-233 and 247-277; these read GHDR…KIWR and GHYN…RVWD. A Phosphothreonine modification is found at T591. R965 carries the omega-N-methylarginine modification. S1193 is subject to Phosphoserine.

Oligomeric complex that consists of at least the alpha, beta, beta', gamma, delta, epsilon and zeta subunits. Interacts with SCYL1. Interacts with JAGN1. Interacts with TMEM41B. Interacts with SVEP1. Probably interacts with PEX11A.

The protein resides in the cytoplasm. It is found in the golgi apparatus membrane. It localises to the cytoplasmic vesicle. Its subcellular location is the COPI-coated vesicle membrane. The protein localises to the secreted. In terms of biological role, the coatomer is a cytosolic protein complex that binds to dilysine motifs and reversibly associates with Golgi non-clathrin-coated vesicles, which further mediate biosynthetic protein transport from the ER, via the Golgi up to the trans Golgi network. Coatomer complex is required for budding from Golgi membranes, and is essential for the retrograde Golgi-to-ER transport of dilysine-tagged proteins. In mammals, the coatomer can only be recruited by membranes associated to ADP-ribosylation factors (ARFs), which are small GTP-binding proteins; the complex also influences the Golgi structural integrity, as well as the processing, activity, and endocytic recycling of LDL receptors. Functionally, xenin stimulates exocrine pancreatic secretion. It inhibits pentagastrin-stimulated secretion of acid, to induce exocrine pancreatic secretion and to affect small and large intestinal motility. In the gut, xenin interacts with the neurotensin receptor. This is Coatomer subunit alpha (COPA) from Bos taurus (Bovine).